The following is a 244-amino-acid chain: MKIDLNADLGEGCASDAELLTLVSSANIACGFHAGDAQIMQACVREAIKNGVAIGAHPSFPDRENFGRSAMQLPPETVYAQTLYQIGALATIARAQGGVMRHVKPHGMLYNQAAKEAQLADAIARAVYACDPALILVGLAGSELIRAGKQYGLTTREEVFADRGYQADGSLVPRSQSGALIENEEQALAQTLEMVQHGRVKSITGEWATVAAQTVCLHGDGEHALAFARRLRSAFAEKGIVVAA.

This sequence belongs to the LamB/PxpA family. In terms of assembly, forms a complex composed of PxpA, PxpB and PxpC.

The catalysed reaction is 5-oxo-L-proline + ATP + 2 H2O = L-glutamate + ADP + phosphate + H(+). Functionally, catalyzes the cleavage of 5-oxoproline to form L-glutamate coupled to the hydrolysis of ATP to ADP and inorganic phosphate. The sequence is that of 5-oxoprolinase subunit A from Escherichia coli (strain K12).